The following is a 280-amino-acid chain: 4-diphosphocytidyl-2-C-methyl-D-erythritol kinase (280 aa).

The active site involves lysine 8. Position 91–101 (91–101 (PVAAGLAGGSS)) interacts with ATP. Residue aspartate 133 is part of the active site.

Belongs to the GHMP kinase family. IspE subfamily.

It catalyses the reaction 4-CDP-2-C-methyl-D-erythritol + ATP = 4-CDP-2-C-methyl-D-erythritol 2-phosphate + ADP + H(+). It functions in the pathway isoprenoid biosynthesis; isopentenyl diphosphate biosynthesis via DXP pathway; isopentenyl diphosphate from 1-deoxy-D-xylulose 5-phosphate: step 3/6. In terms of biological role, catalyzes the phosphorylation of the position 2 hydroxy group of 4-diphosphocytidyl-2C-methyl-D-erythritol. This is 4-diphosphocytidyl-2-C-methyl-D-erythritol kinase from Clostridium kluyveri (strain NBRC 12016).